The chain runs to 357 residues: DNA replication and repair protein RecF (357 aa).

Residue glycine 30–threonine 37 participates in ATP binding.

Belongs to the RecF family.

The protein localises to the cytoplasm. In terms of biological role, the RecF protein is involved in DNA metabolism; it is required for DNA replication and normal SOS inducibility. RecF binds preferentially to single-stranded, linear DNA. It also seems to bind ATP. In Escherichia fergusonii (strain ATCC 35469 / DSM 13698 / CCUG 18766 / IAM 14443 / JCM 21226 / LMG 7866 / NBRC 102419 / NCTC 12128 / CDC 0568-73), this protein is DNA replication and repair protein RecF.